The primary structure comprises 320 residues: Cytochrome f (320 aa).

Positions 1-35 (MQTRNTFSWIKEQITRSISASLMIYIITRTSISNA) are cleaved as a signal peptide. Residues Y36, C56, C59, and H60 each coordinate heme. Residues 286 to 306 (VQGLLFFFAAVILAQIFLVLK) form a helical membrane-spanning segment.

It belongs to the cytochrome f family. As to quaternary structure, the 4 large subunits of the cytochrome b6-f complex are cytochrome b6, subunit IV (17 kDa polypeptide, petD), cytochrome f and the Rieske protein, while the 4 small subunits are PetG, PetL, PetM and PetN. The complex functions as a dimer. Requires heme as cofactor.

It is found in the plastid. It localises to the chloroplast thylakoid membrane. In terms of biological role, component of the cytochrome b6-f complex, which mediates electron transfer between photosystem II (PSII) and photosystem I (PSI), cyclic electron flow around PSI, and state transitions. In Helianthus annuus (Common sunflower), this protein is Cytochrome f.